A 429-amino-acid chain; its full sequence is Adenylosuccinate synthetase (429 aa).

GTP is bound by residues 12–18 (GDEGKGK) and 40–42 (GHT). Asp-13 acts as the Proton acceptor in catalysis. Mg(2+) is bound by residues Asp-13 and Gly-40. IMP contacts are provided by residues 13-16 (DEGK), 38-41 (NAGH), Thr-129, Arg-143, Gln-223, Thr-238, and Arg-302. Residue His-41 is the Proton donor of the active site. Residue 298–304 (TVTGRPR) coordinates substrate. GTP contacts are provided by residues Arg-304, 330–332 (KLD), and 412–414 (STS).

It belongs to the adenylosuccinate synthetase family. In terms of assembly, homodimer. Mg(2+) is required as a cofactor.

It is found in the cytoplasm. The catalysed reaction is IMP + L-aspartate + GTP = N(6)-(1,2-dicarboxyethyl)-AMP + GDP + phosphate + 2 H(+). Its pathway is purine metabolism; AMP biosynthesis via de novo pathway; AMP from IMP: step 1/2. Its function is as follows. Plays an important role in the de novo pathway of purine nucleotide biosynthesis. Catalyzes the first committed step in the biosynthesis of AMP from IMP. This is Adenylosuccinate synthetase from Paramagnetospirillum magneticum (strain ATCC 700264 / AMB-1) (Magnetospirillum magneticum).